The following is a 97-amino-acid chain: Putative CC-type chemokine U83 (97 aa).

Cystine bridges form between Cys32–Cys62 and Cys33–Cys76.

The protein belongs to the intercrine beta (chemokine CC) family. Highly divergent.

The sequence is that of Putative CC-type chemokine U83 (U83) from Human herpesvirus 6A (strain Uganda-1102) (HHV-6 variant A).